Reading from the N-terminus, the 877-residue chain is Kinetochore null protein 2 (877 aa).

The region spanning isoleucine 20–aspartate 107 is the SANTA domain. Disordered regions lie at residues arginine 122–valine 315, phenylalanine 338–asparagine 535, and methionine 549–isoleucine 604. Residues glutamine 153–alanine 211 adopt a coiled-coil conformation. A compositionally biased stretch (basic and acidic residues) spans serine 156–glutamate 199. Positions isoleucine 251–serine 279 are enriched in polar residues. 3 stretches are compositionally biased toward basic and acidic residues: residues glutamate 359–arginine 385, arginine 394–aspartate 444, and valine 453–arginine 480. Residues glutamate 491–methionine 549 adopt a coiled-coil conformation. Over residues glutamine 511–serine 520 the composition is skewed to low complexity. The span at arginine 573 to proline 583 shows a compositional bias: polar residues. Over residues alanine 592–asparagine 601 the composition is skewed to basic and acidic residues. The region spanning valine 617–proline 678 is the Myb-like domain. Disordered regions lie at residues arginine 757–proline 785 and methionine 808–tyrosine 877. 2 stretches are compositionally biased toward polar residues: residues serine 775–proline 785 and serine 819–serine 836. Over residues glutamate 856–glutamate 871 the composition is skewed to acidic residues.

This sequence belongs to the KNL2 family. Interacts with hcp-3.

The protein resides in the nucleus. The protein localises to the chromosome. Its subcellular location is the centromere. It is found in the kinetochore. Required for the recruitment of hcp-3, hcp-4, knl-1, bub-1 and lin-53 to kinetochores, kinetochore assembly, chromosome condensation and chromosome segregation in meiosis and mitosis. This chain is Kinetochore null protein 2, found in Caenorhabditis elegans.